The sequence spans 189 residues: Movement protein (189 aa).

Belongs to the tombusvirus/aureusvirus movement protein p22 family. Interacts with host protein HFI22. In terms of processing, phosphorylated.

It localises to the host membrane. Functionally, transports viral genome to neighboring plant cells directly through plasmosdesmata, without any budding. The movement protein allows efficient cell to cell propagation, by bypassing the host cell wall barrier. The polypeptide is Movement protein (Tomato bushy stunt virus (strain BS-3) (TBSV)).